We begin with the raw amino-acid sequence, 241 residues long: Uridylate kinase (241 aa).

12–15 (KLSG) contacts ATP. Gly54 is a UMP binding site. Gly55 and Arg59 together coordinate ATP. UMP contacts are provided by residues Asp74 and 135-142 (TGNPFFTT). Positions 162, 168, and 171 each coordinate ATP.

This sequence belongs to the UMP kinase family. Homohexamer.

It localises to the cytoplasm. It catalyses the reaction UMP + ATP = UDP + ADP. It functions in the pathway pyrimidine metabolism; CTP biosynthesis via de novo pathway; UDP from UMP (UMPK route): step 1/1. Its activity is regulated as follows. Inhibited by UTP. Its function is as follows. Catalyzes the reversible phosphorylation of UMP to UDP. The sequence is that of Uridylate kinase from Magnetococcus marinus (strain ATCC BAA-1437 / JCM 17883 / MC-1).